The following is a 345-amino-acid chain: 3-hydroxy-5-methyl-1-naphthoate 3-O-methyltransferase (345 aa).

Asp205 serves as a coordination point for S-adenosyl-L-methionine. Residue His252 is the Proton acceptor of the active site.

Belongs to the class I-like SAM-binding methyltransferase superfamily. Cation-independent O-methyltransferase family.

The enzyme catalyses 3-hydroxy-5-methyl-1-naphthoate + S-adenosyl-L-methionine = 3-methoxy-5-methyl-1-naphthoate + S-adenosyl-L-homocysteine + H(+). It functions in the pathway antibiotic biosynthesis. Its activity is regulated as follows. Inhibited by different divalent cations, such as Mg(2+), Mn(2+), Fe(2+), Cu(2+) and Zn(2+). Its function is as follows. O-methyltransferase that mediates the formation of 3-methoxy-5-methyl-1-naphthoate from 3-hydroxy-5-methyl-1-naphthoate in the biosynthesis of the antitumor antibiotic azinomycin B. The polypeptide is 3-hydroxy-5-methyl-1-naphthoate 3-O-methyltransferase (Streptomyces sahachiroi).